The following is a 300-amino-acid chain: Peroxisomal 2,4-dienoyl-CoA reductase [(3E)-enoyl-CoA-producing] (300 aa).

Residues Gly-42 to Ile-47, Arg-67 to Lys-71, and Asp-93 contribute to the NADP(+) site. Arg-67 is a substrate binding site. Residues Arg-95, Phe-125, and Ser-133–Asn-135 each bind substrate. Residues Lys-189 and Pro-215–Thr-221 each bind NADP(+). Arg-226 contacts substrate. Positions Ala-298–Leu-300 match the Microbody targeting signal motif.

Belongs to the short-chain dehydrogenases/reductases (SDR) family. 2,4-dienoyl-CoA reductase subfamily. In terms of assembly, monomer, dimer and oligomer.

It localises to the peroxisome. It catalyses the reaction a (2E,4Z)-dienoyl-CoA + NADPH + H(+) = a 4,5-saturated-(3E)-enoyl-CoA + NADP(+). The catalysed reaction is a (2E,4E)-dienoyl-CoA + NADPH + H(+) = a 4,5-saturated-(3E)-enoyl-CoA + NADP(+). It carries out the reaction (2E,4E)-hexadienoyl-CoA + NADPH + H(+) = (3E)-hexenoyl-CoA + NADP(+). The enzyme catalyses (2E,4E)-decadienoyl-CoA + NADPH + H(+) = (3E)-decenoyl-CoA + NADP(+). It catalyses the reaction (2E,4Z,7Z,10Z,13Z,16Z,19Z)-docosaheptaenoyl-CoA + NADPH + H(+) = (3E,7Z,10Z,13Z,16Z,19Z)-docosahexaenoyl-CoA + NADP(+). Functionally, auxiliary enzyme of beta-oxidation. Participates in the degradation of unsaturated fatty enoyl-CoA esters having double bonds in both even- and odd-numbered positions in peroxisome. Catalyzes the NADP-dependent reduction of 2,4-dienoyl-CoA to yield trans-3-enoyl-CoA. This chain is Peroxisomal 2,4-dienoyl-CoA reductase [(3E)-enoyl-CoA-producing] (decr2), found in Danio rerio (Zebrafish).